A 354-amino-acid chain; its full sequence is 5,10-methenyltetrahydromethanopterin hydrogenase (354 aa).

It belongs to the HMD family.

It catalyses the reaction 5,10-methenyl-5,6,7,8-tetrahydromethanopterin + H2 = 5,10-methylenetetrahydromethanopterin + H(+). Its pathway is one-carbon metabolism; methanogenesis from CO(2); 5,10-methylene-5,6,7,8-tetrahydromethanopterin from 5,10-methenyl-5,6,7,8-tetrahydromethanopterin (hydrogen route): step 1/1. Functionally, catalyzes the reversible reduction of methenyl-H(4)MPT(+) to methylene-H(4)MPT. The polypeptide is 5,10-methenyltetrahydromethanopterin hydrogenase (Methanococcus vannielii (strain ATCC 35089 / DSM 1224 / JCM 13029 / OCM 148 / SB)).